The following is a 35-amino-acid chain: Cupiennin-1c (35 aa).

Residue glutamate 35 is modified to Glutamic acid 1-amide.

As to expression, expressed by the venom gland.

The protein localises to the secreted. Its function is as follows. Has antimicrobial activity against E.coli, E.faecalis, P.aeruginosa, and S.aureus. The chain is Cupiennin-1c from Cupiennius salei (American wandering spider).